The sequence spans 371 residues: Probable beta-1,3-galactosyltransferase 12 (371 aa).

Positions 1–36 are disordered; sequence MPLFSHRFTTASSSSPASPSYYNKPSSKTHKPNSSS. Low complexity predominate over residues 11–36; sequence ASSSSPASPSYYNKPSSKTHKPNSSS. A helical; Signal-anchor for type II membrane protein membrane pass occupies residues 46–66; that stretch reads VAIIFFSLVSVFIGVAGTIFA. N291 carries an N-linked (GlcNAc...) asparagine glycan.

It belongs to the glycosyltransferase 31 family. Requires Mn(2+) as cofactor.

It localises to the golgi apparatus membrane. The protein operates within protein modification; protein glycosylation. Functionally, beta-1,3-galactosyltransferase that transfers galactose from UDP-galactose to substrates with a terminal glycosyl residue. The chain is Probable beta-1,3-galactosyltransferase 12 (B3GALT12) from Arabidopsis thaliana (Mouse-ear cress).